The sequence spans 271 residues: Bifunctional protein FolD (271 aa).

Residues G154–S156, S181, and I222 each bind NADP(+).

The protein belongs to the tetrahydrofolate dehydrogenase/cyclohydrolase family. In terms of assembly, homodimer.

The enzyme catalyses (6R)-5,10-methylene-5,6,7,8-tetrahydrofolate + NADP(+) = (6R)-5,10-methenyltetrahydrofolate + NADPH. It carries out the reaction (6R)-5,10-methenyltetrahydrofolate + H2O = (6R)-10-formyltetrahydrofolate + H(+). Its pathway is one-carbon metabolism; tetrahydrofolate interconversion. Its function is as follows. Catalyzes the oxidation of 5,10-methylenetetrahydrofolate to 5,10-methenyltetrahydrofolate and then the hydrolysis of 5,10-methenyltetrahydrofolate to 10-formyltetrahydrofolate. This Thermotoga sp. (strain RQ2) protein is Bifunctional protein FolD.